A 192-amino-acid polypeptide reads, in one-letter code: dCTP deaminase, dUMP-forming (192 aa).

Residues 101–106 (KSSLGR), aspartate 119, 127–129 (TLE), glutamine 148, tyrosine 162, and glutamine 174 each bind dCTP. Glutamate 129 serves as the catalytic Proton donor/acceptor. The interval 162-192 (YGSGADGSRYQGQRGPTASRSHVKFHRTHVE) is disordered. Positions 171–181 (YQGQRGPTASR) are enriched in polar residues. Over residues 182 to 192 (SHVKFHRTHVE) the composition is skewed to basic residues.

This sequence belongs to the dCTP deaminase family. Homotrimer.

The enzyme catalyses dCTP + 2 H2O = dUMP + NH4(+) + diphosphate. It functions in the pathway pyrimidine metabolism; dUMP biosynthesis; dUMP from dCTP: step 1/1. Bifunctional enzyme that catalyzes both the deamination of dCTP to dUTP and the hydrolysis of dUTP to dUMP without releasing the toxic dUTP intermediate. The chain is dCTP deaminase, dUMP-forming from Beutenbergia cavernae (strain ATCC BAA-8 / DSM 12333 / CCUG 43141 / JCM 11478 / NBRC 16432 / NCIMB 13614 / HKI 0122).